The primary structure comprises 107 residues: ADIVMTQTPASVSEPVGGTVTIKCQTSQSIDDYLSWYQQKPGQPPKGLIYRASTLASGVPSRFRGSGSGTDFTLTISDLECADAATYYCQSTYGVGFGGGTEVVVKG.

Residues 1–24 (ADIVMTQTPASVSEPVGGTVTIKC) are framework-1. The complementarity-determining-1 stretch occupies residues 25–35 (QTSQSIDDYLS). Residues 36 to 50 (WYQQKPGQPPKGLIY) form a framework-2 region. The segment at 51 to 57 (RASTLAS) is complementarity-determining-2. The tract at residues 58-89 (GVPSRFRGSGSGTDFTLTISDLECADAATYYC) is framework-3. The tract at residues 90-96 (QSTYGVG) is complementarity-determining-3. A framework-4 region spans residues 97 to 106 (FGGGTEVVVK).

The chain is Ig kappa chain V region 4135 from Oryctolagus cuniculus (Rabbit).